The sequence spans 418 residues: Sterigmatocystin 8-O-methyltransferase (418 aa).

A propeptide spanning residues 1–41 (MALPSKAALVGLANTLSEQVKRYLATAGETKSPEDHKLCIE) is cleaved from the precursor. 170–176 (MRSGASF) serves as a coordination point for substrate. Residues 206–225 (LFDYYSTVDEVRGRRFDLGM) form a substrate binding region. S-adenosyl-L-methionine is bound by residues 254–255 (GG), D277, 297–298 (DI), and R313. H317 serves as the catalytic Proton acceptor.

This sequence belongs to the class I-like SAM-binding methyltransferase superfamily. Cation-independent O-methyltransferase family. COMT subfamily.

It localises to the cytoplasm. The protein localises to the vacuole. The catalysed reaction is sterigmatocystin + S-adenosyl-L-methionine = 8-O-methylsterigmatocystin + S-adenosyl-L-homocysteine + H(+). The enzyme catalyses dihydrosterigmatocystin + S-adenosyl-L-methionine = 8-O-methyldihydrosterigmatocystin + S-adenosyl-L-homocysteine + H(+). It functions in the pathway mycotoxin biosynthesis; aflatoxin biosynthesis. Functionally, sterigmatocystin 8-O-methyltransferase; part of the gene cluster that mediates the biosynthesis of aflatoxins, a group of polyketide-derived furanocoumarins, and part of the most toxic and carcinogenic compounds among the known mycotoxins. The four major aflatoxins produced by A.parasiticus are aflatoxin B1 (AFB1), aflatoxin B2 (AFB2), aflatoxin G1 (AFG1) and aflatoxin G2 (AFG2). Within the aflatoxin pathway, the O-methyltransferase aflP uses both sterigmatocystin (ST) and dihydrosterigmatocystin (DHST) as substrates to yield O-methylsterigmatocystin (OMST) and dihydro-O-methylsterigmatocystin (DHOMST), respectively. The biosynthesis of aflatoxins begins with the norsolorinic acid synthase aflC that combines a hexanoyl starter unit produced by the fatty acid synthase aflA/aflB and 7 malonyl-CoA extender units to synthesize the precursor NOR. The second step is the conversion of NOR to averantin and requires the norsolorinic acid ketoreductase aflD, which catalyzes the dehydration of norsolorinic acid to form (1'S)-averantin. The norsolorinic acid reductases aflE and aflF may also play a role in the conversion of NOR to AVN. The cytochrome P450 monooxygenase aflG then catalyzes the hydroxylation of AVN to 5'hydroxyaverantin (HAVN). The next step is performed by the 5'-hydroxyaverantin dehydrogenase aflH that transforms HAVN to 5'-oxoaverantin (OAVN) which is further converted to averufin (AVF) by aflK that plays a dual role in the pathway, as a 5'-oxoaverantin cyclase that mediates conversion of 5'-oxoaverantin, as well as a versicolorin B synthase in a later step in the pathway. The averufin oxidase aflI catalyzes the conversion of AVF to versiconal hemiacetal acetate (VHA). VHA is then the substrate for the versiconal hemiacetal acetate esterase aflJ to yield versiconal (VAL). Versicolorin B synthase aflK then converts VAL to versicolorin B (VERB) by closing the bisfuran ring of aflatoxin which is required for DNA-binding, thus giving to aflatoxin its activity as a mutagen. Then, the activity of the versicolorin B desaturase aflL leads to versicolorin A (VERA). A branch point starts from VERB since it can also be converted to dihydrodemethylsterigmatocystin (DMDHST), probably also by aflL, VERA being a precursor for aflatoxins B1 and G1, and DMDHST for aflatoxins B2 and G2. Next, the versicolorin reductase aflM and the cytochrome P450 monooxygenase aflN are involved in conversion of VERA to demethylsterigmatocystin (DMST). AflX and aflY seem also involved in this step, through probable aflX-mediated epoxide ring-opening step following versicolorin A oxidation and aflY-mediated Baeyer-Villiger oxidation required for the formation of the xanthone ring. The methyltransferase aflO then leads to the modification of DMST to sterigmatocystin (ST), and of DMDHST to dihydrosterigmatocystin (DHST). Both ST and DHST are then substrates of the O-methyltransferase aflP to yield O-methylsterigmatocystin (OMST) and dihydro-O-methylsterigmatocystin (DHOMST), respectively. Finally OMST is converted to aflatoxins B1 and G1, and DHOMST to aflatoxins B2 and G2, via the action of several enzymes including O-methylsterigmatocystin oxidoreductase aflQ, the cytochrome P450 monooxygenase aflU, but also the NADH-dependent flavin oxidoreductase nadA which is specifically required for the synthesis of AFG1. The chain is Sterigmatocystin 8-O-methyltransferase from Aspergillus parasiticus (strain ATCC 56775 / NRRL 5862 / SRRC 143 / SU-1).